The chain runs to 162 residues: UPF0114 protein PFLU_5318 (162 aa).

The next 3 membrane-spanning stretches (helical) occupy residues 15–35 (LLAP…LKFF), 53–73 (LILV…LVMV), and 136–156 (LMWY…MGYL).

The protein belongs to the UPF0114 family.

Its subcellular location is the cell membrane. The chain is UPF0114 protein PFLU_5318 from Pseudomonas fluorescens (strain SBW25).